Reading from the N-terminus, the 467-residue chain is Chromosomal replication initiator protein DnaA (467 aa).

Residues 1 to 84 (MDISLDQLWD…LQVEFSVSPH (84 aa)) form a domain I, interacts with DnaA modulators region. Positions 84–125 (HASVEAEPPSRAISPTSGRAGSLPASTTLGLEVGGSLPMRAP) are domain II. A disordered region spans residues 89-108 (AEPPSRAISPTSGRAGSLPA). The segment covering 96 to 108 (ISPTSGRAGSLPA) has biased composition (polar residues). Residues 126-342 (DLNPKYSFSR…GALIRAVAYV (217 aa)) are domain III, AAA+ region. Residues G170, G172, K173, and T174 each coordinate ATP. The interval 343–467 (SISGLPMSVE…LRVVANSRSS (125 aa)) is domain IV, binds dsDNA.

Belongs to the DnaA family. Oligomerizes as a right-handed, spiral filament on DNA at oriC.

The protein resides in the cytoplasm. Plays an essential role in the initiation and regulation of chromosomal replication. ATP-DnaA binds to the origin of replication (oriC) to initiate formation of the DNA replication initiation complex once per cell cycle. Binds the DnaA box (a 9 base pair repeat at the origin) and separates the double-stranded (ds)DNA. Forms a right-handed helical filament on oriC DNA; dsDNA binds to the exterior of the filament while single-stranded (ss)DNA is stabiized in the filament's interior. The ATP-DnaA-oriC complex binds and stabilizes one strand of the AT-rich DNA unwinding element (DUE), permitting loading of DNA polymerase. After initiation quickly degrades to an ADP-DnaA complex that is not apt for DNA replication. Binds acidic phospholipids. This chain is Chromosomal replication initiator protein DnaA, found in Synechococcus sp. (strain JA-2-3B'a(2-13)) (Cyanobacteria bacterium Yellowstone B-Prime).